We begin with the raw amino-acid sequence, 925 residues long: NADH:fumarate oxidoreductase (925 aa).

Thr-447 carries the FMN phosphoryl threonine modification. FAD contacts are provided by Ala-492, Glu-511, Asn-519, Thr-520, Ala-525, Gly-526, and Val-633. Residue Ala-525 coordinates fumarate. A succinate-binding site is contributed by Ala-525. Positions 719, 731, and 732 each coordinate succinate. Residues Ser-731 and Glu-732 each coordinate fumarate. Arg-756 serves as the catalytic Proton donor. His-859 is a fumarate binding site. Position 859 (His-859) interacts with succinate. FAD is bound by residues His-860 and Glu-889. Fumarate is bound by residues Arg-899 and Gly-902. Succinate is bound by residues Arg-899 and Gly-902. Ala-904 and Val-905 together coordinate FAD.

This sequence belongs to the FAD-dependent oxidoreductase 2 family. FRD/SDH subfamily. In terms of assembly, monomer. It depends on FAD as a cofactor. FMN serves as cofactor. In terms of processing, is flavinylated on Thr-447 by ApbE2, encoded in a neighboring gene. Flavinylation is essential for catalytic activity.

It is found in the cytoplasm. It carries out the reaction succinate + NAD(+) = fumarate + NADH + H(+). In terms of biological role, catalyzes the anaerobic reduction of fumarate to succinate. Uses NADH as the inherent electron donor in this process. Is involved in anaerobic fumarate respiration in K.pneumoniae. The chain is NADH:fumarate oxidoreductase from Klebsiella pneumoniae (strain 342).